The primary structure comprises 251 residues: GTP cyclohydrolase 1 type 2 homolog (251 aa).

Residues H62, H63, D103, H215, and E219 each coordinate a divalent metal cation.

Belongs to the GTP cyclohydrolase I type 2/NIF3 family. In terms of assembly, homohexamer.

In Mycoplasmopsis pulmonis (strain UAB CTIP) (Mycoplasma pulmonis), this protein is GTP cyclohydrolase 1 type 2 homolog.